We begin with the raw amino-acid sequence, 100 residues long: NADH-quinone oxidoreductase subunit K (100 aa).

3 helical membrane passes run 4-24 (TTWV…GLLS), 28-48 (LLFI…LFIA), and 60-80 (IMYL…LALV).

Belongs to the complex I subunit 4L family. In terms of assembly, NDH-1 is composed of 13 different subunits. Subunits NuoA, H, J, K, L, M, N constitute the membrane sector of the complex.

It localises to the cell inner membrane. The catalysed reaction is a quinone + NADH + 5 H(+)(in) = a quinol + NAD(+) + 4 H(+)(out). NDH-1 shuttles electrons from NADH, via FMN and iron-sulfur (Fe-S) centers, to quinones in the respiratory chain. The immediate electron acceptor for the enzyme in this species is believed to be ubiquinone. Couples the redox reaction to proton translocation (for every two electrons transferred, four hydrogen ions are translocated across the cytoplasmic membrane), and thus conserves the redox energy in a proton gradient. In Shewanella woodyi (strain ATCC 51908 / MS32), this protein is NADH-quinone oxidoreductase subunit K.